A 744-amino-acid chain; its full sequence is Cytoskeleton-associated protein 2-like (744 aa).

Disordered regions lie at residues 35–56 (YLKA…GPKK), 76–169 (LQSR…THVE), 182–216 (KENL…SSLA), 317–337 (TVTE…VLQG), and 428–452 (NKTA…GAQT). Composition is skewed to polar residues over residues 76 to 86 (LQSRPANITRS), 102 to 129 (SESV…STDG), and 137 to 154 (GSLN…VTDQ). Lys-195 participates in a covalent cross-link: Glycyl lysine isopeptide (Lys-Gly) (interchain with G-Cter in SUMO1); alternate. Residue Lys-195 forms a Glycyl lysine isopeptide (Lys-Gly) (interchain with G-Cter in SUMO2); alternate linkage. Residues 199–216 (ESWTINKPQTNQTKSSLA) show a composition bias toward polar residues. Ser-744 carries the post-translational modification Phosphoserine.

The protein belongs to the CKAP2 family. In terms of processing, ubiquitinated by the anaphase promoting complex/cyclosome (APC/C).

It is found in the cytoplasm. The protein resides in the cytoskeleton. Its subcellular location is the spindle pole. Microtubule-associated protein required for mitotic spindle formation and cell-cycle progression in neural progenitor cells. In Bos taurus (Bovine), this protein is Cytoskeleton-associated protein 2-like (CKAP2L).